A 417-amino-acid polypeptide reads, in one-letter code: Actin-related protein 10 (417 aa).

Belongs to the actin family. Subunit of dynactin, a multiprotein complex part of a tripartite complex with dynein and a adapter, such as BICDL1, BICD2 or HOOK3. The dynactin complex is built around ACTR1A/ACTB filament and consists of an actin-related filament composed of a shoulder domain, a pointed end and a barbed end. Its length is defined by its flexible shoulder domain. The soulder is composed of 2 DCTN1 subunits, 4 DCTN2 and 2 DCTN3. The 4 DCNT2 (via N-terminus) bind the ACTR1A filament and act as molecular rulers to determine the length. The pointed end is important for binding dynein-dynactin cargo adapters. Consists of 4 subunits: ACTR10, DCNT4, DCTN5 and DCTN6. The barbed end is composed of a CAPZA1:CAPZB heterodimers, which binds ACTR1A/ACTB filament and dynactin and stabilizes dynactin.

Its subcellular location is the cytoplasm. It is found in the cytoskeleton. Functionally, part of the dynactin complex that activates the molecular motor dynein for ultra-processive transport along microtubules. The polypeptide is Actin-related protein 10 (ACTR10) (Homo sapiens (Human)).